The sequence spans 158 residues: NAD(P)H-quinone oxidoreductase subunit N (158 aa).

The protein belongs to the complex I NdhN subunit family. In terms of assembly, NDH-1 can be composed of about 15 different subunits; different subcomplexes with different compositions have been identified which probably have different functions.

It is found in the cellular thylakoid membrane. It carries out the reaction a plastoquinone + NADH + (n+1) H(+)(in) = a plastoquinol + NAD(+) + n H(+)(out). The enzyme catalyses a plastoquinone + NADPH + (n+1) H(+)(in) = a plastoquinol + NADP(+) + n H(+)(out). In terms of biological role, NDH-1 shuttles electrons from an unknown electron donor, via FMN and iron-sulfur (Fe-S) centers, to quinones in the respiratory and/or the photosynthetic chain. The immediate electron acceptor for the enzyme in this species is believed to be plastoquinone. Couples the redox reaction to proton translocation, and thus conserves the redox energy in a proton gradient. Cyanobacterial NDH-1 also plays a role in inorganic carbon-concentration. This Trichodesmium erythraeum (strain IMS101) protein is NAD(P)H-quinone oxidoreductase subunit N.